The primary structure comprises 469 residues: Zinc finger and BTB domain-containing protein 8A.1-B (469 aa).

A BTB domain is found at 24–92 (CDCHIIVEGQ…VYSGKLPLSG (69 aa)). C2H2-type zinc fingers lie at residues 315–337 (FKCPFCTHTVKRKADLKRHLRCH) and 343–366 (YPCEACGKRFTRLEHLRNHFQTIH).

The protein localises to the nucleus. Functionally, may be involved in transcriptional regulation. The polypeptide is Zinc finger and BTB domain-containing protein 8A.1-B (zbtb8a.1-b) (Xenopus laevis (African clawed frog)).